Consider the following 830-residue polypeptide: Formin-like protein 14 (830 aa).

An N-terminal signal peptide occupies residues 1–34 (MAMAMAMPSSSPPLFFSLLNLMLLLLLLAPYCSA). Polar residues predominate over residues 40–59 (NNTHHRSSSPTQTTLQQLHS). The tract at residues 40 to 195 (NNTHHRSSSP…NISTLVHPTQ (156 aa)) is disordered. Pro residues-rich tracts occupy residues 61–86 (DSPP…PAPR) and 95–135 (PPPP…PTPK). Low complexity predominate over residues 149-160 (YPFTNYPFFPNF). Residues 203–223 (VLQALLLSFLSLCLLLLSALL) form a helical membrane-spanning segment. The tract at residues 235–446 (HHSHSHPNAR…LHSDKLKPGS (212 aa)) is disordered. The segment covering 314–323 (RPLPPLPRVG) has biased composition (pro residues). The segment covering 324 to 369 (PPSGEFASRSSASDPSTAPPAAAEASSSSLSPSSPSASSPTLGSSP) has biased composition (low complexity). The FH2 domain maps to 390-823 (PKRRPQPPEP…MMGRDWNMAA (434 aa)). Over residues 424-446 (HSPSEKSMRKSRPLHSDKLKPGS) the composition is skewed to basic and acidic residues.

It belongs to the formin-like family. Class-I subfamily.

It is found in the membrane. The chain is Formin-like protein 14 (FH14) from Oryza sativa subsp. japonica (Rice).